The primary structure comprises 117 residues: DNA polymerase epsilon subunit 4 (117 aa).

A disordered region spans residues 1-36 (MAAAAAAGSGTPREEEGPAGEAAASQPQAPTSVPGA). An N-acetylalanine modification is found at A2. Position 11 is a phosphothreonine (T11). Residues 19–30 (AGEAAASQPQAP) show a composition bias toward low complexity. Phosphoserine is present on S25.

Component of the DNA polymerase epsilon complex consisting of four subunits: the catalytic subunit POLE and the accessory subunits POLE2, POLE3 and POLE4. Interaction with POLE3 is a prerequisite for further binding with POLE and POLE2.

It is found in the nucleus. In terms of biological role, accessory component of the DNA polymerase epsilon complex. Participates in DNA repair and in chromosomal DNA replication. This is DNA polymerase epsilon subunit 4 (POLE4) from Homo sapiens (Human).